The following is a 283-amino-acid chain: Reaction center protein L chain (283 aa).

3 helical membrane passes run 33–56 (GFFG…GASQ), 85–113 (GLWQ…RKLG), and 116–141 (YHVP…LLMG). (7R,8Z)-bacteriochlorophyll b contacts are provided by His154 and His174. Residues 171 to 200 (NPAHMLAVTLFFTTTLALALHGGLILSACN) traverse the membrane as a helical segment. His191 contacts Fe cation. Phe217 contributes to the a ubiquinone binding site. A helical membrane pass occupies residues 226-252 (GTLGIHRLGYLLAINAGLWSAICIIIS). His231 contributes to the Fe cation binding site.

Belongs to the reaction center PufL/M/PsbA/D family. As to quaternary structure, reaction center is composed of four bacteriochlorophylls, two bacteriopheophytins, two ubiquinones, one iron, and three highly hydrophobic polypeptide chains (designated L, M, and H).

It localises to the cellular chromatophore membrane. In terms of biological role, the reaction center is a membrane-bound complex that mediates the initial photochemical event in the electron transfer process of photosynthesis. The chain is Reaction center protein L chain (pufL) from Roseobacter denitrificans (strain ATCC 33942 / OCh 114) (Erythrobacter sp. (strain OCh 114)).